The primary structure comprises 142 residues: Large ribosomal subunit protein uL13 (142 aa).

This sequence belongs to the universal ribosomal protein uL13 family. Part of the 50S ribosomal subunit.

In terms of biological role, this protein is one of the early assembly proteins of the 50S ribosomal subunit, although it is not seen to bind rRNA by itself. It is important during the early stages of 50S assembly. In Aromatoleum aromaticum (strain DSM 19018 / LMG 30748 / EbN1) (Azoarcus sp. (strain EbN1)), this protein is Large ribosomal subunit protein uL13.